The following is a 151-amino-acid chain: 3-hydroxyacyl-[acyl-carrier-protein] dehydratase FabZ (151 aa).

His54 is an active-site residue.

The protein belongs to the thioester dehydratase family. FabZ subfamily.

It localises to the cytoplasm. The enzyme catalyses a (3R)-hydroxyacyl-[ACP] = a (2E)-enoyl-[ACP] + H2O. In terms of biological role, involved in unsaturated fatty acids biosynthesis. Catalyzes the dehydration of short chain beta-hydroxyacyl-ACPs and long chain saturated and unsaturated beta-hydroxyacyl-ACPs. The sequence is that of 3-hydroxyacyl-[acyl-carrier-protein] dehydratase FabZ from Sodalis glossinidius (strain morsitans).